Consider the following 183-residue polypeptide: Adenine phosphoribosyltransferase (183 aa).

This sequence belongs to the purine/pyrimidine phosphoribosyltransferase family. As to quaternary structure, homodimer.

The protein resides in the cytoplasm. It carries out the reaction AMP + diphosphate = 5-phospho-alpha-D-ribose 1-diphosphate + adenine. It functions in the pathway purine metabolism; AMP biosynthesis via salvage pathway; AMP from adenine: step 1/1. Functionally, catalyzes a salvage reaction resulting in the formation of AMP, that is energically less costly than de novo synthesis. In Salmonella arizonae (strain ATCC BAA-731 / CDC346-86 / RSK2980), this protein is Adenine phosphoribosyltransferase.